The primary structure comprises 156 residues: Small ribosomal subunit protein uS7 (156 aa).

Belongs to the universal ribosomal protein uS7 family. In terms of assembly, part of the 30S ribosomal subunit. Contacts proteins S9 and S11.

Its function is as follows. One of the primary rRNA binding proteins, it binds directly to 16S rRNA where it nucleates assembly of the head domain of the 30S subunit. Is located at the subunit interface close to the decoding center, probably blocks exit of the E-site tRNA. This is Small ribosomal subunit protein uS7 from Bacillus cereus (strain B4264).